Here is a 195-residue protein sequence, read N- to C-terminus: Peptidyl-tRNA hydrolase (195 aa).

Tyr18 is a binding site for tRNA. Residue His23 is the Proton acceptor of the active site. Residues Tyr69, Asn71, and Asn117 each coordinate tRNA.

The protein belongs to the PTH family. In terms of assembly, monomer.

It localises to the cytoplasm. It catalyses the reaction an N-acyl-L-alpha-aminoacyl-tRNA + H2O = an N-acyl-L-amino acid + a tRNA + H(+). Hydrolyzes ribosome-free peptidyl-tRNAs (with 1 or more amino acids incorporated), which drop off the ribosome during protein synthesis, or as a result of ribosome stalling. Functionally, catalyzes the release of premature peptidyl moieties from peptidyl-tRNA molecules trapped in stalled 50S ribosomal subunits, and thus maintains levels of free tRNAs and 50S ribosomes. The protein is Peptidyl-tRNA hydrolase of Nitrosomonas europaea (strain ATCC 19718 / CIP 103999 / KCTC 2705 / NBRC 14298).